A 163-amino-acid chain; its full sequence is Putative 4-hydroxy-4-methyl-2-oxoglutarate aldolase (163 aa).

Substrate contacts are provided by residues 76–79 (GDML) and R98. D99 provides a ligand contact to a divalent metal cation.

Belongs to the class II aldolase/RraA-like family. Homotrimer. A divalent metal cation is required as a cofactor.

It carries out the reaction 4-hydroxy-4-methyl-2-oxoglutarate = 2 pyruvate. It catalyses the reaction oxaloacetate + H(+) = pyruvate + CO2. Functionally, catalyzes the aldol cleavage of 4-hydroxy-4-methyl-2-oxoglutarate (HMG) into 2 molecules of pyruvate. Also contains a secondary oxaloacetate (OAA) decarboxylase activity due to the common pyruvate enolate transition state formed following C-C bond cleavage in the retro-aldol and decarboxylation reactions. In Pseudomonas entomophila (strain L48), this protein is Putative 4-hydroxy-4-methyl-2-oxoglutarate aldolase.